The chain runs to 156 residues: 6,7-dimethyl-8-ribityllumazine synthase (156 aa).

Residues F23, 57-59, and 81-83 contribute to the 5-amino-6-(D-ribitylamino)uracil site; these read AYE and AII. (2S)-2-hydroxy-3-oxobutyl phosphate is bound at residue 86-87; sequence GT. H89 (proton donor) is an active-site residue. F114 provides a ligand contact to 5-amino-6-(D-ribitylamino)uracil. A (2S)-2-hydroxy-3-oxobutyl phosphate-binding site is contributed by R128.

It belongs to the DMRL synthase family.

It catalyses the reaction (2S)-2-hydroxy-3-oxobutyl phosphate + 5-amino-6-(D-ribitylamino)uracil = 6,7-dimethyl-8-(1-D-ribityl)lumazine + phosphate + 2 H2O + H(+). Its pathway is cofactor biosynthesis; riboflavin biosynthesis; riboflavin from 2-hydroxy-3-oxobutyl phosphate and 5-amino-6-(D-ribitylamino)uracil: step 1/2. Functionally, catalyzes the formation of 6,7-dimethyl-8-ribityllumazine by condensation of 5-amino-6-(D-ribitylamino)uracil with 3,4-dihydroxy-2-butanone 4-phosphate. This is the penultimate step in the biosynthesis of riboflavin. This is 6,7-dimethyl-8-ribityllumazine synthase from Helicobacter pylori (strain ATCC 700392 / 26695) (Campylobacter pylori).